We begin with the raw amino-acid sequence, 486 residues long: Ribosomal RNA small subunit methyltransferase F (486 aa).

Residues 122 to 128, Glu146, Asp173, and Asp191 contribute to the S-adenosyl-L-methionine site; that span reads ASAPGSK. Cys244 acts as the Nucleophile in catalysis.

Belongs to the class I-like SAM-binding methyltransferase superfamily. RsmB/NOP family.

The protein localises to the cytoplasm. It carries out the reaction cytidine(1407) in 16S rRNA + S-adenosyl-L-methionine = 5-methylcytidine(1407) in 16S rRNA + S-adenosyl-L-homocysteine + H(+). Its function is as follows. Specifically methylates the cytosine at position 1407 (m5C1407) of 16S rRNA. The chain is Ribosomal RNA small subunit methyltransferase F from Shewanella loihica (strain ATCC BAA-1088 / PV-4).